A 479-amino-acid chain; its full sequence is Nuclear receptor subfamily 6 group A member 1 (479 aa).

Residues 1–32 (MERDERPPSGGGGGGGSAGFLEPPAALPPPPR) are disordered. Positions 9-18 (SGGGGGGGSA) are enriched in gly residues. A DNA-binding region (nuclear receptor) is located at residues 57–132 (QRTCLICGDR…MGMNRKAIRE (76 aa)). Residues Cys60, Cys63, Cys77, Cys80, Cys96, Cys102, Cys112, and Cys115 each coordinate Zn(2+). 2 consecutive NR C4-type zinc fingers follow at residues 60–80 (CLIC…CEGC) and 96–120 (CSRD…LLKC). Disordered regions lie at residues 131-150 (REDG…QISE) and 162-198 (FEEE…TLSS). Residues 165-177 (EANHWSNHGDSDH) show a composition bias toward basic and acidic residues. The interval 172–252 (HGDSDHSSPG…RSLDPQSYSL (81 aa)) is sufficient for interaction with UIMC1. A compositionally biased stretch (polar residues) spans 178–198 (SSPGNRASESNQPSPGSTLSS). The NR LBD domain occupies 248 to 479 (QSYSLIHQLV…HSCKTSVGKE (232 aa)).

This sequence belongs to the nuclear hormone receptor family. NR6 subfamily. In terms of assembly, homodimer. Interacts with UIMC1.

The protein localises to the nucleus. Orphan nuclear receptor that binds to a response element containing the sequence 5'-TCAAGGTCA-3'. Acts as a regulator of embryonic stem cell pluripotency by mediating repression of POU5F1/OCT4: binds to the DR0 element within the POU5F1/OCT4 promoter and inhibits POU5F1/OCT4 expression during embryonic stem cell differentiation. Involved in the regulation of gene expression in germ cell development during gametogenesis. This chain is Nuclear receptor subfamily 6 group A member 1 (NR6A1), found in Sus scrofa (Pig).